Reading from the N-terminus, the 871-residue chain is DNA mismatch repair protein MutS 1 (871 aa).

614–621 contributes to the ATP binding site; the sequence is GPNMSGKS.

It belongs to the DNA mismatch repair MutS family.

This protein is involved in the repair of mismatches in DNA. It is possible that it carries out the mismatch recognition step. This protein has a weak ATPase activity. The protein is DNA mismatch repair protein MutS 1 of Halobacterium salinarum (strain ATCC 29341 / DSM 671 / R1).